The sequence spans 424 residues: Protein FAM43A (424 aa).

Residues 261 to 297 (QQEEELQEEEEEHLEDCLEEEEEEDGVGDGDPAEEEA) show a composition bias toward acidic residues. 2 disordered regions span residues 261 to 299 (QQEE…EAEA) and 382 to 424 (LLSG…PYSG). The segment covering 382–394 (LLSGESTGSESSI) has biased composition (low complexity). A compositionally biased stretch (polar residues) spans 405 to 418 (SPGNPSGPADSTSL).

It belongs to the FAM43 family.

This Mus musculus (Mouse) protein is Protein FAM43A (Fam43a).